We begin with the raw amino-acid sequence, 460 residues long: UDP-N-acetylmuramoylalanine--D-glutamate ligase (460 aa).

120–126 contacts ATP; that stretch reads GSNGKTT.

This sequence belongs to the MurCDEF family.

It is found in the cytoplasm. It carries out the reaction UDP-N-acetyl-alpha-D-muramoyl-L-alanine + D-glutamate + ATP = UDP-N-acetyl-alpha-D-muramoyl-L-alanyl-D-glutamate + ADP + phosphate + H(+). It functions in the pathway cell wall biogenesis; peptidoglycan biosynthesis. Cell wall formation. Catalyzes the addition of glutamate to the nucleotide precursor UDP-N-acetylmuramoyl-L-alanine (UMA). The sequence is that of UDP-N-acetylmuramoylalanine--D-glutamate ligase from Lactobacillus delbrueckii subsp. bulgaricus (strain ATCC 11842 / DSM 20081 / BCRC 10696 / JCM 1002 / NBRC 13953 / NCIMB 11778 / NCTC 12712 / WDCM 00102 / Lb 14).